A 459-amino-acid chain; its full sequence is V-type ATP synthase beta chain (459 aa).

It belongs to the ATPase alpha/beta chains family.

Its function is as follows. Produces ATP from ADP in the presence of a proton gradient across the membrane. The V-type beta chain is a regulatory subunit. The protein is V-type ATP synthase beta chain of Thermoanaerobacter pseudethanolicus (strain ATCC 33223 / 39E) (Clostridium thermohydrosulfuricum).